A 513-amino-acid chain; its full sequence is MQLNSTEISELIKQRIAQFNVVSEAHNEGTIVSVSDGVIRIHGLADCMQGEMISLPGNRYAIALNLERDSVGAVVMGPYADLAEGMKVKCTGRILEVPVGRGLLGRVVNTLGAPIDGKGPLDHDGFSAVEAIAPGVIERQSVDQPVQTGYKAVDSMIPIGRGQRELIIGDRQTGKTALAIDAIINQRDSGIKCIYVAIGQKASTISNVVRKLEEHGALANTIVVVATASESAALQYLAPYAGCAMGEYFRDRGEDALIIYDDLSKQAVAYRQISLLLRRPPGREAFPGDVFYLHSRLLERAARVNAEYVEAFTKGEVKGKTGSLTALPIIETQAGDVSAFVPTNVISITDGQIFLETNLFNAGIRPAVNPGISVSRVGGAAQTKIMKKLSGGIRTALAQYRELAAFSQFASDLDDATRKQLDHGQKVTELLKQKQYAPMSVAQQSLVLFAAERGYLADVELSKIGSFEAALLAYVDRDHAPLMQEINQTGGYNDEIEGKLKGILDSFKATQSW.

An ATP-binding site is contributed by 169 to 176 (GDRQTGKT).

It belongs to the ATPase alpha/beta chains family. In terms of assembly, F-type ATPases have 2 components, CF(1) - the catalytic core - and CF(0) - the membrane proton channel. CF(1) has five subunits: alpha(3), beta(3), gamma(1), delta(1), epsilon(1). CF(0) has three main subunits: a(1), b(2) and c(9-12). The alpha and beta chains form an alternating ring which encloses part of the gamma chain. CF(1) is attached to CF(0) by a central stalk formed by the gamma and epsilon chains, while a peripheral stalk is formed by the delta and b chains.

It localises to the cell inner membrane. The enzyme catalyses ATP + H2O + 4 H(+)(in) = ADP + phosphate + 5 H(+)(out). Functionally, produces ATP from ADP in the presence of a proton gradient across the membrane. The alpha chain is a regulatory subunit. The sequence is that of ATP synthase subunit alpha from Escherichia coli O81 (strain ED1a).